The primary structure comprises 104 residues: Large ribosomal subunit protein uL23 (104 aa).

Belongs to the universal ribosomal protein uL23 family. Part of the 50S ribosomal subunit. Contacts protein L29, and trigger factor when it is bound to the ribosome.

Its function is as follows. One of the early assembly proteins it binds 23S rRNA. One of the proteins that surrounds the polypeptide exit tunnel on the outside of the ribosome. Forms the main docking site for trigger factor binding to the ribosome. This is Large ribosomal subunit protein uL23 from Nostoc sp. (strain PCC 7120 / SAG 25.82 / UTEX 2576).